The sequence spans 105 residues: Small ribosomal subunit protein uS17 (105 aa).

This sequence belongs to the universal ribosomal protein uS17 family. As to quaternary structure, part of the 30S ribosomal subunit. Contacts protein S12.

Functionally, one of the primary rRNA binding proteins, it binds directly to 16S rRNA where it helps nucleate assembly of the platform and body of the 30S subunit by bringing together and stabilizing interactions between several different RNA helices. The combined cluster of proteins S8, S12 and S17 appears to hold together the shoulder and platform of the 30S subunit. This is Small ribosomal subunit protein uS17 from Thermus thermophilus (strain ATCC 27634 / DSM 579 / HB8).